Here is a 245-residue protein sequence, read N- to C-terminus: tRNA1(Val) (adenine(37)-N6)-methyltransferase (245 aa).

This sequence belongs to the methyltransferase superfamily. tRNA (adenine-N(6)-)-methyltransferase family.

It localises to the cytoplasm. It carries out the reaction adenosine(37) in tRNA1(Val) + S-adenosyl-L-methionine = N(6)-methyladenosine(37) in tRNA1(Val) + S-adenosyl-L-homocysteine + H(+). Its function is as follows. Specifically methylates the adenine in position 37 of tRNA(1)(Val) (anticodon cmo5UAC). The chain is tRNA1(Val) (adenine(37)-N6)-methyltransferase from Salmonella arizonae (strain ATCC BAA-731 / CDC346-86 / RSK2980).